We begin with the raw amino-acid sequence, 191 residues long: Small ribosomal subunit protein uS5 (191 aa).

The disordered stretch occupies residues 1–20 (MAGERERGGRERSRDREERD). The 64-residue stretch at 23 to 86 (FVDKLVHINR…ESAKRNLTRV (64 aa)) folds into the S5 DRBM domain.

This sequence belongs to the universal ribosomal protein uS5 family. As to quaternary structure, part of the 30S ribosomal subunit. Contacts proteins S4 and S8.

Functionally, with S4 and S12 plays an important role in translational accuracy. In terms of biological role, located at the back of the 30S subunit body where it stabilizes the conformation of the head with respect to the body. This is Small ribosomal subunit protein uS5 from Nitrobacter winogradskyi (strain ATCC 25391 / DSM 10237 / CIP 104748 / NCIMB 11846 / Nb-255).